Consider the following 114-residue polypeptide: MRLWFCLSFFIVLCLEHFPGTLADERNNRDYTIRTRLHGHHKPSRNNRYAIKTSIHGHHIPRNVPESEEKTEQFLRDLPKINRKGPRPPGFSPFRGKFHSQSLRQIPGLGPLRG.

The signal sequence occupies residues 1 to 23 (MRLWFCLSFFIVLCLEHFPGTLA). The segment covering 35–45 (TRLHGHHKPSR) has biased composition (basic residues). Positions 35–114 (TRLHGHHKPS…QIPGLGPLRG (80 aa)) are disordered. The span at 65 to 80 (PESEEKTEQFLRDLPK) shows a compositional bias: basic and acidic residues. Arginine 113 is subject to Arginine amide.

It belongs to the bradykinin-related peptide family. In terms of tissue distribution, expressed by the skin glands.

It is found in the secreted. Functionally, potent vasodilator. Binds B1 (BDKRB1) and B2 (BDKRB2) bradykinin receptors. The protein is Kininogen-2 of Bombina maxima (Giant fire-bellied toad).